We begin with the raw amino-acid sequence, 260 residues long: Snake venom serine protease homolog 2 (260 aa).

Residues 1–18 (MVLIRVLANLLVLQLSYA) form the signal peptide. The propeptide occupies 19–24 (QKSSEL). A Peptidase S1 domain is found at 25–251 (VIGGDECNIN…YTDWIQSIIA (227 aa)). Disulfide bonds link Cys-31–Cys-165, Cys-52–Cys-68, Cys-100–Cys-258, Cys-144–Cys-212, Cys-176–Cys-191, and Cys-202–Cys-227. N-linked (GlcNAc...) asparagine glycosylation occurs at Asn-123. The N-linked (GlcNAc...) asparagine glycan is linked to Asn-253.

Belongs to the peptidase S1 family. Snake venom subfamily. As to expression, expressed by the venom gland.

The protein resides in the secreted. In terms of biological role, snake venom serine protease homolog that may act in the hemostasis system of the prey. This chain is Snake venom serine protease homolog 2, found in Macrovipera lebetinus (Levantine viper).